The sequence spans 354 residues: Protein-arginine kinase (354 aa).

The Phosphagen kinase C-terminal domain maps to 24 to 254 (IVLSSRIRLA…QQIIQQEKMA (231 aa)). Residues 27–31 (SSRIR), His92, Arg125, 176–180 (RASVM), and 207–212 (RGIYGE) each bind ATP. The RDXXRA motif of the pArg binding pocket involved in allosteric regulation signature appears at 337 to 342 (RDYRRA).

The protein belongs to the ATP:guanido phosphotransferase family.

It carries out the reaction L-arginyl-[protein] + ATP = N(omega)-phospho-L-arginyl-[protein] + ADP + H(+). With respect to regulation, appears to be allosterically activated by the binding of pArg-containing polypeptides to the pArg-binding pocket localized in the C-terminal domain of McsB. Its function is as follows. Catalyzes the specific phosphorylation of arginine residues in a large number of proteins. Is part of the bacterial stress response system. Protein arginine phosphorylation has a physiologically important role and is involved in the regulation of many critical cellular processes, such as protein homeostasis, motility, competence, and stringent and stress responses, by regulating gene expression and protein activity. The protein is Protein-arginine kinase of Bacillus thuringiensis subsp. konkukian (strain 97-27).